The primary structure comprises 265 residues: MIKWPWKVQESAHQTALPWQEALSIPLLTCLTEQEQSKLVTLAERFLQQKRLLPLQGFELDSLRSCRIALLFCLPVLELGLEWLDGFHEVLIYPAPFVVDDEWEDDIGLVHNQRIVQSGQSWQQGPIVLNWLDIQDSFDASGFNLIIHEVAHKLDTRNGDRASGVPFIPLREVAGWEYDLHAAMNNIQEEIELVGENAASIDAYAASDPAECFAVLSEYFFSAPELFAPRFPSLWQRFCQFYQQDPLQRLHHANDTDSFSTTNVH.

Residues H111, H148, H152, and E211 each coordinate Zn(2+).

It belongs to the MtfA family. As to quaternary structure, interacts with Mlc. Zn(2+) serves as cofactor.

It localises to the cytoplasm. In terms of biological role, involved in the modulation of the activity of the glucose-phosphotransferase system (glucose-PTS). Interacts with the transcriptional repressor Mlc, preventing its interaction with DNA and leading to the modulation of expression of genes regulated by Mlc, including ptsG, which encodes the PTS system glucose-specific EIICB component. Shows zinc-dependent metallopeptidase activity. The chain is Mlc titration factor A from Escherichia coli O17:K52:H18 (strain UMN026 / ExPEC).